Here is a 427-residue protein sequence, read N- to C-terminus: 4-hydroxy-3-methylbut-2-en-1-yl diphosphate synthase (flavodoxin) (427 aa).

Positions 300, 303, 346, and 353 each coordinate [4Fe-4S] cluster.

Belongs to the IspG family. [4Fe-4S] cluster serves as cofactor.

It carries out the reaction (2E)-4-hydroxy-3-methylbut-2-enyl diphosphate + oxidized [flavodoxin] + H2O + 2 H(+) = 2-C-methyl-D-erythritol 2,4-cyclic diphosphate + reduced [flavodoxin]. It functions in the pathway isoprenoid biosynthesis; isopentenyl diphosphate biosynthesis via DXP pathway; isopentenyl diphosphate from 1-deoxy-D-xylulose 5-phosphate: step 5/6. In terms of biological role, converts 2C-methyl-D-erythritol 2,4-cyclodiphosphate (ME-2,4cPP) into 1-hydroxy-2-methyl-2-(E)-butenyl 4-diphosphate. The chain is 4-hydroxy-3-methylbut-2-en-1-yl diphosphate synthase (flavodoxin) from Chromobacterium violaceum (strain ATCC 12472 / DSM 30191 / JCM 1249 / CCUG 213 / NBRC 12614 / NCIMB 9131 / NCTC 9757 / MK).